We begin with the raw amino-acid sequence, 70 residues long: DNA gyrase inhibitor YacG (70 aa).

Residues 1 to 15 (MPEDKKAAAKVEPLR) show a composition bias toward basic and acidic residues. Positions 1 to 22 (MPEDKKAAAKVEPLRKTRPCPE) are disordered. Zn(2+)-binding residues include Cys-20, Cys-23, Cys-35, and Cys-39.

It belongs to the DNA gyrase inhibitor YacG family. As to quaternary structure, interacts with GyrB. It depends on Zn(2+) as a cofactor.

Its function is as follows. Inhibits all the catalytic activities of DNA gyrase by preventing its interaction with DNA. Acts by binding directly to the C-terminal domain of GyrB, which probably disrupts DNA binding by the gyrase. The polypeptide is DNA gyrase inhibitor YacG (Rhizobium johnstonii (strain DSM 114642 / LMG 32736 / 3841) (Rhizobium leguminosarum bv. viciae)).